Consider the following 738-residue polypeptide: YTH domain-containing protein 1 (738 aa).

Residues 1-12 (MAADSREEKDGE) are compositionally biased toward basic and acidic residues. Residues 1–341 (MAADSREEKD…KHEKLSSSVR (341 aa)) form a disordered region. Ser35 carries the phosphoserine modification. A compositionally biased stretch (basic and acidic residues) spans 50 to 59 (ERMESIDTKR). A compositionally biased stretch (polar residues) spans 63–90 (SIHSRQLISKPLSSSVSNNKRIVSTKGK). Over residues 91 to 115 (SVTEYKNEEYQRSERNKRLDADRKI) the composition is skewed to basic and acidic residues. Lys96 participates in a covalent cross-link: Glycyl lysine isopeptide (Lys-Gly) (interchain with G-Cter in SUMO2). Residues Ser118 and Ser120 each carry the phosphoserine modification. Residues 124–144 (EPYKSQPEKPCLRKRDSERRA) show a composition bias toward basic and acidic residues. A Phosphoserine modification is found at Ser146. Residue Thr148 is modified to Phosphothreonine. 2 stretches are compositionally biased toward basic and acidic residues: residues 151–163 (GSERIGLEVDRRA) and 170–185 (SKEEGNSEEYGSDHET). A compositionally biased stretch (polar residues) spans 186–197 (GSSASSEQGNNT). Positions 198 to 257 (ENEEEGGEEDVEEDEEVDEDGDDDEEVDEDAEEEEDEEEDEEEEDEEEEEEEEEEYEQDE) are enriched in acidic residues. Positions 258–273 (RDQKEEGNDYDTRSEA) are enriched in basic and acidic residues. The segment covering 283 to 292 (FTDGSVRSGS) has biased composition (polar residues). 5 positions are modified to phosphoserine: Ser311, Ser318, Ser320, Ser321, and Ser323. Residues 318–328 (SGSSASESYAG) show a composition bias toward low complexity. A YTH domain is found at 358 to 495 (ARFFLIKSNN…ECGTQLCLLF (138 aa)). RNA contacts are provided by residues 364–366 (KSN) and Trp380. Phosphoserine is present on Ser427. RNA is bound at residue Trp431. Ser438 is subject to Phosphoserine. Asp479 serves as a coordination point for RNA. Over residues 512–526 (HKRRMHSQPRSRGRP) the composition is skewed to basic residues. 3 disordered regions span residues 512 to 566 (HKRR…RPGY), 618 to 654 (GMPPYPGIEQPPHHPYYQHHAPPPQAHPPYSGHHPVP), and 680 to 738 (AVVS…RYRR). A compositionally biased stretch (basic and acidic residues) spans 527–566 (SRREPVRDVGRRRPEDYDIHNSRKKPRIDYPPEFHQRPGY). Ser548 is subject to Phosphoserine. The segment covering 690 to 738 (RERDRERERDRPRDNRRDRERDRGRDRERERERICDRDRDRGERGRYRR) has biased composition (basic and acidic residues).

In terms of assembly, interacts with SRSF1. Interacts with SRSF2. Interacts with SRSF3. Interacts with SRSF7. Interacts with SRSF10. Interacts with CPSF6. Interacts with KHDRBS1/SAM68. Interacts with TRA2B. Interacts with KHDRBS3. Interacts with EMD. Interacts with RBMX. Interacts with ZCCHC8. Post-translationally, tyrosine phosphorylated. Ubiquitous.

It localises to the nucleus. Its subcellular location is the nucleus speckle. Functionally, regulator of alternative splicing that specifically recognizes and binds N6-methyladenosine (m6A)-containing RNAs. M6A is a modification present at internal sites of mRNAs and some non-coding RNAs and plays a role in the efficiency of mRNA splicing, processing and stability. Acts as a key regulator of exon-inclusion or exon-skipping during alternative splicing via interaction with mRNA splicing factors SRSF3 and SRSF10. Specifically binds m6A-containing mRNAs and promotes recruitment of SRSF3 to its mRNA-binding elements adjacent to m6A sites, leading to exon-inclusion during alternative splicing. In contrast, interaction with SRSF3 prevents interaction with SRSF10, a splicing factor that promotes exon skipping: this prevents SRSF10 from binding to its mRNA-binding sites close to m6A-containing regions, leading to inhibit exon skipping during alternative splicing. May also regulate alternative splice site selection. Also involved in nuclear export of m6A-containing mRNAs via interaction with SRSF3: interaction with SRSF3 facilitates m6A-containing mRNA-binding to both SRSF3 and NXF1, promoting mRNA nuclear export. Involved in S-adenosyl-L-methionine homeostasis by regulating expression of MAT2A transcripts, probably by binding m6A-containing MAT2A mRNAs. Also recognizes and binds m6A on other RNA molecules. Involved in random X inactivation mediated by Xist RNA: recognizes and binds m6A-containing Xist and promotes transcription repression activity of Xist. Also recognizes and binds m6A-containing single-stranded DNA. Involved in germline development: required for spermatogonial development in males and oocyte growth and maturation in females, probably via its role in alternative splicing. The protein is YTH domain-containing protein 1 (Ythdc1) of Rattus norvegicus (Rat).